A 156-amino-acid polypeptide reads, in one-letter code: MSRRHAAEKREVLPDPKFGNIIVTKFMNSVMYAGKKSVAESIVYGAFDLIEAKTKQPPLGVFEQALDNVMPTIEVRSRRVGGATYQVPVEVRSTRRQALGIRWLITAARGRNEKTMTERLSAELLDASNNRGNAVKKREDVHKMAEANRAFSHYRW.

As to quaternary structure, part of the 30S ribosomal subunit. Contacts proteins S9 and S11.

In terms of biological role, one of the primary rRNA binding proteins, it binds directly to 16S rRNA where it nucleates assembly of the head domain of the 30S subunit. Is located at the subunit interface close to the decoding center, probably blocks exit of the E-site tRNA. This chain is Small ribosomal subunit protein uS7, found in Rhodopseudomonas palustris (strain ATCC BAA-98 / CGA009).